A 334-amino-acid chain; its full sequence is Glycerol-1-phosphate dehydrogenase [NAD(P)+] (334 aa).

Residues 77–81 and 99–102 contribute to the NAD(+) site; these read GRPID and TTAS. Aspartate 104 serves as a coordination point for substrate. Residue serine 108 participates in NAD(+) binding. Aspartate 147 is a binding site for substrate. Zn(2+) contacts are provided by aspartate 147 and histidine 225. Histidine 229 contacts substrate. Position 246 (histidine 246) interacts with Zn(2+).

Belongs to the glycerol-1-phosphate dehydrogenase family. Requires Zn(2+) as cofactor.

The protein localises to the cytoplasm. The enzyme catalyses sn-glycerol 1-phosphate + NAD(+) = dihydroxyacetone phosphate + NADH + H(+). It carries out the reaction sn-glycerol 1-phosphate + NADP(+) = dihydroxyacetone phosphate + NADPH + H(+). It participates in membrane lipid metabolism; glycerophospholipid metabolism. Catalyzes the NAD(P)H-dependent reduction of dihydroxyacetonephosphate (DHAP or glycerone phosphate) to glycerol 1-phosphate (G1P). The G1P thus generated is used as the glycerophosphate backbone of phospholipids in the cellular membranes of Archaea. The protein is Glycerol-1-phosphate dehydrogenase [NAD(P)+] of Methanococcus maripaludis (strain C7 / ATCC BAA-1331).